The sequence spans 95 residues: DNA/RNA-binding protein Alba (95 aa).

The residue at position 13 (K13) is an N6-acetyllysine.

It belongs to the histone-like Alba family. Post-translationally, acetylated. Acetylation at Lys-13 decreases DNA-binding affinity.

Its subcellular location is the cytoplasm. The protein localises to the chromosome. Binds double-stranded DNA tightly but without sequence specificity. Involved in DNA compaction. This is DNA/RNA-binding protein Alba from Nitrosopumilus maritimus (strain SCM1).